Consider the following 142-residue polypeptide: Putative transcriptional regulatory protein PF0535 (142 aa).

It belongs to the Tfx family.

Putative transcriptional regulator. The sequence is that of Putative transcriptional regulatory protein PF0535 from Pyrococcus furiosus (strain ATCC 43587 / DSM 3638 / JCM 8422 / Vc1).